The following is a 186-amino-acid chain: Elongation factor P (186 aa).

This sequence belongs to the elongation factor P family.

It is found in the cytoplasm. Its pathway is protein biosynthesis; polypeptide chain elongation. Functionally, involved in peptide bond synthesis. Stimulates efficient translation and peptide-bond synthesis on native or reconstituted 70S ribosomes in vitro. Probably functions indirectly by altering the affinity of the ribosome for aminoacyl-tRNA, thus increasing their reactivity as acceptors for peptidyl transferase. The polypeptide is Elongation factor P (Cupriavidus metallidurans (strain ATCC 43123 / DSM 2839 / NBRC 102507 / CH34) (Ralstonia metallidurans)).